Here is a 282-residue protein sequence, read N- to C-terminus: Biotin synthase (282 aa).

Residues 1 to 228 (MQEIFLCSIS…NARLMVAGGR (228 aa)) enclose the Radical SAM core domain. Cysteine 17, cysteine 21, and cysteine 24 together coordinate [4Fe-4S] cluster. Positions 61, 96, 154, and 221 each coordinate [2Fe-2S] cluster.

It belongs to the radical SAM superfamily. Biotin synthase family. As to quaternary structure, homodimer. [4Fe-4S] cluster is required as a cofactor. The cofactor is [2Fe-2S] cluster.

The enzyme catalyses (4R,5S)-dethiobiotin + (sulfur carrier)-SH + 2 reduced [2Fe-2S]-[ferredoxin] + 2 S-adenosyl-L-methionine = (sulfur carrier)-H + biotin + 2 5'-deoxyadenosine + 2 L-methionine + 2 oxidized [2Fe-2S]-[ferredoxin]. The protein operates within cofactor biosynthesis; biotin biosynthesis; biotin from 7,8-diaminononanoate: step 2/2. Functionally, catalyzes the conversion of dethiobiotin (DTB) to biotin by the insertion of a sulfur atom into dethiobiotin via a radical-based mechanism. The protein is Biotin synthase of Helicobacter pylori (strain HPAG1).